The sequence spans 325 residues: GMP reductase (325 aa).

Cys-173 (thioimidate intermediate) is an active-site residue. 202-225 (IIADGGIHEHGDIAKSIRFGATMV) is an NADP(+) binding site.

It belongs to the IMPDH/GMPR family. GuaC type 2 subfamily.

It carries out the reaction IMP + NH4(+) + NADP(+) = GMP + NADPH + 2 H(+). Functionally, catalyzes the irreversible NADPH-dependent deamination of GMP to IMP. It functions in the conversion of nucleobase, nucleoside and nucleotide derivatives of G to A nucleotides, and in maintaining the intracellular balance of A and G nucleotides. This chain is GMP reductase, found in Albidiferax ferrireducens (strain ATCC BAA-621 / DSM 15236 / T118) (Rhodoferax ferrireducens).